Here is a 401-residue protein sequence, read N- to C-terminus: Phosphoglycerate kinase 3, cytosolic (401 aa).

Val24, Asp25, Asn27, Arg41, Ser63, His64, Gly66, Arg67, Arg122, His154, and Arg155 together coordinate (2R)-3-phosphoglycerate. Gly200 provides a ligand contact to ADP. Gly200 serves as a coordination point for CDP. Positions 202 and 206 each coordinate AMP. Lys206 contacts ATP. Gly224 is an ADP binding site. Residue Gly224 coordinates CDP. 2 residues coordinate AMP: Gly225 and Gly297. The ATP site is built by Gly225, Gly297, and Asn321. Positions 322 and 327 each coordinate CDP. Phe327 lines the ADP pocket. AMP is bound at residue Glu328. The ATP site is built by Glu328, Asp359, and Ser360. Asp359 provides a ligand contact to Mg(2+).

Belongs to the phosphoglycerate kinase family. As to quaternary structure, monomer. The cofactor is Mg(2+). In terms of tissue distribution, expressed in roots, leaves and inflorescence.

It localises to the cytoplasm. The catalysed reaction is (2R)-3-phosphoglycerate + ATP = (2R)-3-phospho-glyceroyl phosphate + ADP. It functions in the pathway carbohydrate degradation; glycolysis; pyruvate from D-glyceraldehyde 3-phosphate: step 2/5. This is Phosphoglycerate kinase 3, cytosolic from Arabidopsis thaliana (Mouse-ear cress).